A 179-amino-acid chain; its full sequence is MIKYIKGDLFTHTPSSRSAISIFAHACNCRGSWGGGIATVFYRKFPSAYKIYADYCSTHADDPSKLLGTTLLIPSSSSDPGNENGQKIVYVACLFTSDFYGKKKLTPGDIAANTDLSMKDLDTQLESLKEEKEIESTDQGEVVVNMPKINAGLFAVPWEITEDVLNKFNNLHINVYVVD.

One can recognise a Macro domain in the interval 1–179 (MIKYIKGDLF…NLHINVYVVD (179 aa)). Substrate-binding positions include 7–9 (GDL), 26–28 (ACN), 33–38 (WGGGIA), and 149–155 (INAGLFA).

Belongs to the POA1 family.

The enzyme catalyses ADP-alpha-D-ribose 1''-phosphate + H2O = ADP-D-ribose + phosphate. Highly specific phosphatase involved in the metabolism of ADP-ribose 1''-phosphate (Appr1p) which is produced as a consequence of tRNA splicing. This chain is ADP-ribose 1''-phosphate phosphatase (POA1), found in Debaryomyces hansenii (strain ATCC 36239 / CBS 767 / BCRC 21394 / JCM 1990 / NBRC 0083 / IGC 2968) (Yeast).